A 364-amino-acid chain; its full sequence is Methylthioribose-1-phosphate isomerase (364 aa).

The active-site Proton donor is aspartate 254.

This sequence belongs to the eIF-2B alpha/beta/delta subunits family. MtnA subfamily.

The protein resides in the cytoplasm. It localises to the nucleus. The enzyme catalyses 5-(methylsulfanyl)-alpha-D-ribose 1-phosphate = 5-(methylsulfanyl)-D-ribulose 1-phosphate. The protein operates within amino-acid biosynthesis; L-methionine biosynthesis via salvage pathway; L-methionine from S-methyl-5-thio-alpha-D-ribose 1-phosphate: step 1/6. Catalyzes the interconversion of methylthioribose-1-phosphate (MTR-1-P) into methylthioribulose-1-phosphate (MTRu-1-P). This Drosophila melanogaster (Fruit fly) protein is Methylthioribose-1-phosphate isomerase.